Consider the following 198-residue polypeptide: ATP synthase subunit b (198 aa).

Residues 25–45 (PLSELLIGTLAFGLLVAFFFW) traverse the membrane as a helical segment.

Belongs to the ATPase B chain family. In terms of assembly, F-type ATPases have 2 components, F(1) - the catalytic core - and F(0) - the membrane proton channel. F(1) has five subunits: alpha(3), beta(3), gamma(1), delta(1), epsilon(1). F(0) has three main subunits: a(1), b(2) and c(10-14). The alpha and beta chains form an alternating ring which encloses part of the gamma chain. F(1) is attached to F(0) by a central stalk formed by the gamma and epsilon chains, while a peripheral stalk is formed by the delta and b chains.

The protein localises to the cell membrane. Its function is as follows. F(1)F(0) ATP synthase produces ATP from ADP in the presence of a proton or sodium gradient. F-type ATPases consist of two structural domains, F(1) containing the extramembraneous catalytic core and F(0) containing the membrane proton channel, linked together by a central stalk and a peripheral stalk. During catalysis, ATP synthesis in the catalytic domain of F(1) is coupled via a rotary mechanism of the central stalk subunits to proton translocation. Functionally, component of the F(0) channel, it forms part of the peripheral stalk, linking F(1) to F(0). This Frankia alni (strain DSM 45986 / CECT 9034 / ACN14a) protein is ATP synthase subunit b.